Reading from the N-terminus, the 191-residue chain is Potassium-transporting ATPase KdpC subunit (191 aa).

A helical transmembrane segment spans residues 6–26 (PALVLFILLTLLTGGVYPLLT).

It belongs to the KdpC family. In terms of assembly, the system is composed of three essential subunits: KdpA, KdpB and KdpC.

It localises to the cell inner membrane. Its function is as follows. Part of the high-affinity ATP-driven potassium transport (or Kdp) system, which catalyzes the hydrolysis of ATP coupled with the electrogenic transport of potassium into the cytoplasm. This subunit acts as a catalytic chaperone that increases the ATP-binding affinity of the ATP-hydrolyzing subunit KdpB by the formation of a transient KdpB/KdpC/ATP ternary complex. This chain is Potassium-transporting ATPase KdpC subunit, found in Klebsiella pneumoniae (strain 342).